A 469-amino-acid chain; its full sequence is RNA-editing ligase 1, mitochondrial (469 aa).

Residues 1–44 (MQLQRLGAPLLKRLVGGCIRQSTAPIMPCVVVSGSGVFLTPVRT) constitute a mitochondrion transit peptide. Residues 59-61 (IEI), 86-92 (EKVHGTN), R111, E159, F209, and 307-309 (KLR) each bind ATP. Residue K87 is the N6-AMP-lysine intermediate of the active site. The tract at residues 450–469 (AAAQSEAIPPLSPAAPTKGE) is disordered.

This sequence belongs to the RNA ligase 2 family. Component of the RNA editing complex (editosome), a 1600 kDa complex composed of at least 20 proteins. Interacts with terminal uridylyltransferase MEAT1.

Its subcellular location is the mitochondrion. It carries out the reaction ATP + (ribonucleotide)n-3'-hydroxyl + 5'-phospho-(ribonucleotide)m = (ribonucleotide)n+m + AMP + diphosphate.. In terms of biological role, essential for RNA editing. RNA editing in kinetoplastid mitochondria inserts and deletes uridylates at multiple sites in pre-mRNAs as directed by guide RNAs. The protein is RNA-editing ligase 1, mitochondrial (REL1) of Trypanosoma brucei brucei.